The chain runs to 410 residues: Arginine deiminase (410 aa).

Cys-400 functions as the Amidino-cysteine intermediate in the catalytic mechanism.

The protein belongs to the arginine deiminase family.

The protein localises to the cytoplasm. It catalyses the reaction L-arginine + H2O = L-citrulline + NH4(+). The protein operates within amino-acid degradation; L-arginine degradation via ADI pathway; carbamoyl phosphate from L-arginine: step 1/2. The sequence is that of Arginine deiminase from Streptococcus agalactiae serotype III (strain NEM316).